Reading from the N-terminus, the 209-residue chain is Uracil phosphoribosyltransferase (209 aa).

Residues Arg-79, Arg-104, and 131-139 (DPMLATGNS) each bind 5-phospho-alpha-D-ribose 1-diphosphate. Residues Ile-194 and 199-201 (GDA) each bind uracil. Asp-200 is a 5-phospho-alpha-D-ribose 1-diphosphate binding site.

Belongs to the UPRTase family. The cofactor is Mg(2+).

The enzyme catalyses UMP + diphosphate = 5-phospho-alpha-D-ribose 1-diphosphate + uracil. It participates in pyrimidine metabolism; UMP biosynthesis via salvage pathway; UMP from uracil: step 1/1. Allosterically activated by GTP. Catalyzes the conversion of uracil and 5-phospho-alpha-D-ribose 1-diphosphate (PRPP) to UMP and diphosphate. The protein is Uracil phosphoribosyltransferase of Acidovorax ebreus (strain TPSY) (Diaphorobacter sp. (strain TPSY)).